The following is a 219-amino-acid chain: Sugar fermentation stimulation protein homolog (219 aa).

Belongs to the SfsA family.

This Archaeoglobus fulgidus (strain ATCC 49558 / DSM 4304 / JCM 9628 / NBRC 100126 / VC-16) protein is Sugar fermentation stimulation protein homolog.